The primary structure comprises 337 residues: GTPase Obg (337 aa).

The Obg domain occupies 1-159 (MKFVDSASIF…LMLNMELKLM (159 aa)). Positions 160 to 323 (ADVGLVGFPN…LKDELWREVS (164 aa)) constitute an OBG-type G domain. Residues 166–173 (GFPNAGKS), 191–195 (FTTLV), 213–216 (DIPG), 280–283 (TKMD), and 304–306 (SAV) contribute to the GTP site. Mg(2+) contacts are provided by S173 and T193.

Belongs to the TRAFAC class OBG-HflX-like GTPase superfamily. OBG GTPase family. As to quaternary structure, monomer. Requires Mg(2+) as cofactor.

The protein localises to the cytoplasm. Functionally, an essential GTPase which binds GTP, GDP and possibly (p)ppGpp with moderate affinity, with high nucleotide exchange rates and a fairly low GTP hydrolysis rate. Plays a role in control of the cell cycle, stress response, ribosome biogenesis and in those bacteria that undergo differentiation, in morphogenesis control. In Pelodictyon phaeoclathratiforme (strain DSM 5477 / BU-1), this protein is GTPase Obg.